Consider the following 428-residue polypeptide: Serine--tRNA ligase (428 aa).

231–233 contacts L-serine; that stretch reads TAE. 262 to 264 contacts ATP; the sequence is RSE. Glu285 contacts L-serine. ATP is bound at residue 349–352; it reads EISS. Ser385 serves as a coordination point for L-serine.

The protein belongs to the class-II aminoacyl-tRNA synthetase family. Type-1 seryl-tRNA synthetase subfamily. As to quaternary structure, homodimer. The tRNA molecule binds across the dimer.

The protein localises to the cytoplasm. The enzyme catalyses tRNA(Ser) + L-serine + ATP = L-seryl-tRNA(Ser) + AMP + diphosphate + H(+). It carries out the reaction tRNA(Sec) + L-serine + ATP = L-seryl-tRNA(Sec) + AMP + diphosphate + H(+). The protein operates within aminoacyl-tRNA biosynthesis; selenocysteinyl-tRNA(Sec) biosynthesis; L-seryl-tRNA(Sec) from L-serine and tRNA(Sec): step 1/1. In terms of biological role, catalyzes the attachment of serine to tRNA(Ser). Is also able to aminoacylate tRNA(Sec) with serine, to form the misacylated tRNA L-seryl-tRNA(Sec), which will be further converted into selenocysteinyl-tRNA(Sec). The sequence is that of Serine--tRNA ligase from Cellvibrio japonicus (strain Ueda107) (Pseudomonas fluorescens subsp. cellulosa).